A 156-amino-acid chain; its full sequence is Longistatin (156 aa).

The N-terminal stretch at 1-21 (MTHRRLLWALCVAALLGVVAA) is a signal peptide. 2 EF-hand domains span residues 70 to 105 (SQDE…TNHH) and 123 to 156 (DIAS…TNQI). Positions 83, 85, 87, 89, 94, 135, 137, 139, 141, and 146 each coordinate Ca(2+).

Interacts with host fibrin. Interacts with human RAGE/AGER. As to expression, saliva (at protein level). Salivary gland (at protein level). Not detected in midgut, ovary, trachea, Malpighian tubule system, synganglion and cuticle.

The protein resides in the secreted. The protein localises to the cytoplasm. With respect to regulation, resistant to inhibition by host SERPINE1. Inhibited by PMSF, aprotinin, antipain and leupeptin. Inhibited by Zn(2+). Anticoagulant and fibrinolytic protease that modulates blood feeding of ticks on vertebrate hosts. Degrades host fibrinogen and delays fibrin clot formation. Promotes lysis of fibrin clots in the host by activating host plasminogen in the presence of soluble fibrin. Binds Ca(2+). Hydrolyzes serine protease-specific substrates. Required for the formation of a blood pool, an accumulation of blood and tissue fluid developed at the tick's feeding site. Blocks activation of host AGER/RAGE. Reduces AGER/RAGE-dependent production of reactive oxygen species (ROS) in human endothelial cells. Prevents AGER/RAGE-dependent activation of NF-kappa-B and suppresses expression of adhesion molecules, such as VCAM1, ICAM1 and SELE, and secretion of cytokines, such as CSF3/GCSF and TGF-beta, in human endothelial cells. Suppresses RAGE/AGER-mediated migration of mouse peritoneal resident cells. Reduces AGER/RAGE-mediated inflammation in mice tissues. This Haemaphysalis longicornis (Bush tick) protein is Longistatin.